An 845-amino-acid chain; its full sequence is Alanine--tRNA ligase (845 aa).

Positions 552, 556, 653, and 657 each coordinate Zn(2+).

This sequence belongs to the class-II aminoacyl-tRNA synthetase family. Zn(2+) is required as a cofactor.

It localises to the cytoplasm. It catalyses the reaction tRNA(Ala) + L-alanine + ATP = L-alanyl-tRNA(Ala) + AMP + diphosphate. Catalyzes the attachment of alanine to tRNA(Ala) in a two-step reaction: alanine is first activated by ATP to form Ala-AMP and then transferred to the acceptor end of tRNA(Ala). Also edits incorrectly charged Ser-tRNA(Ala) and Gly-tRNA(Ala) via its editing domain. The polypeptide is Alanine--tRNA ligase (Campylobacter hominis (strain ATCC BAA-381 / DSM 21671 / CCUG 45161 / LMG 19568 / NCTC 13146 / CH001A)).